The chain runs to 272 residues: Merozoite surface protein 2 (272 aa).

A signal peptide spans 1–20 (MKVIKTLSIINFFIFVTFNI). N-linked (GlcNAc...) asparagine glycosylation is found at N22 and N36. A polymorphic region region spans residues 44–198 (AESKPSTGAG…EQTESPELQS (155 aa)). Positions 45-233 (ESKPSTGAGG…DSQKECTDGN (189 aa)) are disordered. Residues 51 to 82 (GAGGSAGGSAGGSAGGSAGGSAGGSAGSGDGN) show a composition bias toward gly residues. 6 tandem repeats follow at residues 53–56 (GGSA), 57–60 (GGSA), 61–64 (GGSA), 65–68 (GGSA), 69–72 (GGSA), and 73–76 (GGSA). Residues 53 to 76 (GGSAGGSAGGSAGGSAGGSAGGSA) form a 6 X 4 AA tandem repeats of G-G-S-A region. Positions 83–119 (GADAEGSSSTPATTTTTKTTTTTTTTNDAEASTSTSS) are enriched in low complexity. Residues 122–137 (PNHKNAETNPKGKGEV) are compositionally biased toward basic and acidic residues. 2 stretches are compositionally biased toward polar residues: residues 139 to 165 (EPNQANKETQNNSNVQQDSQTKSNVPP) and 172 to 200 (KSPTAQPEQAENSAPTAEQTESPELQSAP). N149 carries N-linked (GlcNAc...) asparagine glycosylation. N-linked (GlcNAc...) asparagine glycosylation is present at N221. Residues C229 and C237 are joined by a disulfide bond. 2 N-linked (GlcNAc...) asparagine glycosylation sites follow: N245 and N246. A lipid anchor (GPI-anchor amidated asparagine) is attached at N246. Residues 247-272 (SSNIASINKFVVLISATLVLSFAIFI) constitute a propeptide, removed in mature form.

The protein resides in the cell membrane. May play a role in the merozoite attachment to the erythrocyte. This chain is Merozoite surface protein 2, found in Plasmodium falciparum (isolate 3D7).